An 86-amino-acid chain; its full sequence is Small ribosomal subunit protein uS17 (86 aa).

The protein belongs to the universal ribosomal protein uS17 family. Part of the 30S ribosomal subunit.

Functionally, one of the primary rRNA binding proteins, it binds specifically to the 5'-end of 16S ribosomal RNA. In Helicobacter pylori (strain P12), this protein is Small ribosomal subunit protein uS17.